Here is an 862-residue protein sequence, read N- to C-terminus: Interleukin-12 receptor subunit beta-2 (862 aa).

A signal peptide spans 1–23 (MAHTFRGCSLAFMFIITWLLIKA). Topologically, residues 24–622 (KIDACKRGDV…REFCLQGKAN (599 aa)) are extracellular. 5 N-linked (GlcNAc...) asparagine glycosylation sites follow: N48, N129, N166, N195, and N271. 5 consecutive Fibronectin type-III domains span residues 126-221 (QPQN…FLDI), 226-319 (PPWD…TPEE), 320-419 (EPTG…LCEA), 423-520 (APRQ…KHKA), and 521-620 (PLSG…LQGK). Residues 305-309 (WSDWS) carry the WSXWS motif motif. Residues N347, N376, and N480 are each glycosylated (N-linked (GlcNAc...) asparagine). The helical transmembrane segment at 623–643 (WMAFVAPSICIAIIMVGIFST) threads the bilayer. The Cytoplasmic portion of the chain corresponds to 644–862 (HYFQQKVFVL…LKMRCDSLML (219 aa)). The Box 1 motif motif lies at 662–670 (CSREIPDPA). The disordered stretch occupies residues 725 to 755 (NWPQREKGIQGHQASEKDMMHSASSPPPPRA). Basic and acidic residues predominate over residues 728–744 (QREKGIQGHQASEKDMM). Residues 796-801 (THDGYL) form a required for STAT4 binding region. Y800 bears the Phosphotyrosine mark.

Belongs to the type I cytokine receptor family. Type 2 subfamily. In terms of assembly, heterodimer/heterooligomer; disulfide-linked. The functional high affinity IL12 receptor is composed of I12RB1 and IL12RB2. Il12RB2 binds JAK2 (via its N-terminal) through a membrane-proximal region of the cytoplasmic domain. Interaction, in vitro and in vivo, with SOCS3 (via its SH2 domain) inhibits the STAT4-mediated activation. Binds STAT4 through a membrane-distal C-terminal region. On IL12 binding, phosphorylated on C-terminal tyrosine residues by JAK2. Phosphorylation on Tyr-800 is required for STAT4 binding and activation, and for SOCS3 binding. In terms of tissue distribution, isoform 2 is expressed at similar levels in both naive and activated T-cells.

The protein resides in the membrane. In terms of biological role, receptor for interleukin-12. This subunit is the signaling component coupling to the JAK2/STAT4 pathway. Promotes the proliferation of T-cells as well as NK cells. Induces the promotion of T-cells towards the Th1 phenotype by strongly enhancing IFN-gamma production. The protein is Interleukin-12 receptor subunit beta-2 (IL12RB2) of Homo sapiens (Human).